Here is a 98-residue protein sequence, read N- to C-terminus: NADH-ubiquinone oxidoreductase chain 4L (98 aa).

Transmembrane regions (helical) follow at residues 1 to 21 (MMPINLNLIMAFSLALIGALV), 28 to 48 (STLLCLEGMMLSLFIQMALLI), and 59 to 79 (APLILLVFSACEAGLGLALLV).

The protein belongs to the complex I subunit 4L family. As to quaternary structure, core subunit of respiratory chain NADH dehydrogenase (Complex I) which is composed of 45 different subunits.

The protein localises to the mitochondrion inner membrane. The enzyme catalyses a ubiquinone + NADH + 5 H(+)(in) = a ubiquinol + NAD(+) + 4 H(+)(out). Functionally, core subunit of the mitochondrial membrane respiratory chain NADH dehydrogenase (Complex I) which catalyzes electron transfer from NADH through the respiratory chain, using ubiquinone as an electron acceptor. Part of the enzyme membrane arm which is embedded in the lipid bilayer and involved in proton translocation. The chain is NADH-ubiquinone oxidoreductase chain 4L (MT-ND4L) from Distoechurus pennatus (Feather-tailed possum).